Here is a 380-residue protein sequence, read N- to C-terminus: Bifunctional enzyme IspD/IspF (380 aa).

Residues 1-224 (MTIPATYAAI…ERILGDAMDI (224 aa)) form a 2-C-methyl-D-erythritol 4-phosphate cytidylyltransferase region. The segment at 225-380 (RLGNGFDVHA…SIATATLVKG (156 aa)) is 2-C-methyl-D-erythritol 2,4-cyclodiphosphate synthase. A divalent metal cation is bound by residues aspartate 231 and histidine 233. 4-CDP-2-C-methyl-D-erythritol 2-phosphate-binding positions include 231–233 (DVH) and 257–258 (HS). Histidine 265 is a binding site for a divalent metal cation. Residues 279–281 (DIG), 355–358 (TTSE), phenylalanine 362, and arginine 365 contribute to the 4-CDP-2-C-methyl-D-erythritol 2-phosphate site.

It in the N-terminal section; belongs to the IspD/TarI cytidylyltransferase family. IspD subfamily. This sequence in the C-terminal section; belongs to the IspF family. The cofactor is a divalent metal cation.

It catalyses the reaction 2-C-methyl-D-erythritol 4-phosphate + CTP + H(+) = 4-CDP-2-C-methyl-D-erythritol + diphosphate. The enzyme catalyses 4-CDP-2-C-methyl-D-erythritol 2-phosphate = 2-C-methyl-D-erythritol 2,4-cyclic diphosphate + CMP. Its pathway is isoprenoid biosynthesis; isopentenyl diphosphate biosynthesis via DXP pathway; isopentenyl diphosphate from 1-deoxy-D-xylulose 5-phosphate: step 2/6. It functions in the pathway isoprenoid biosynthesis; isopentenyl diphosphate biosynthesis via DXP pathway; isopentenyl diphosphate from 1-deoxy-D-xylulose 5-phosphate: step 4/6. Its function is as follows. Bifunctional enzyme that catalyzes the formation of 4-diphosphocytidyl-2-C-methyl-D-erythritol from CTP and 2-C-methyl-D-erythritol 4-phosphate (MEP) (IspD), and catalyzes the conversion of 4-diphosphocytidyl-2-C-methyl-D-erythritol 2-phosphate (CDP-ME2P) to 2-C-methyl-D-erythritol 2,4-cyclodiphosphate (ME-CPP) with a corresponding release of cytidine 5-monophosphate (CMP) (IspF). The chain is Bifunctional enzyme IspD/IspF from Paracoccus denitrificans (strain Pd 1222).